The chain runs to 760 residues: Polyribonucleotide nucleotidyltransferase (760 aa).

The Mg(2+) site is built by Asp492 and Asp498. Residues 559–618 (PQHAEVFVNPDIIRIIIGPGGKNIKAITATTGASIDIEDSGRVSIFAPTLEAMEMAREMV) form the KH domain. One can recognise an S1 motif domain in the interval 628–702 (GKNYTGKVRK…SRKAVLLEEQ (75 aa)). The disordered stretch occupies residues 706–760 (WKPEDTARPSGPREGGRRDGGRDGRRDGGRDGRRDGGRDGGRRDGGRRDGGRDRN). Residues 719 to 760 (EGGRRDGGRDGRRDGGRDGRRDGGRDGGRRDGGRRDGGRDRN) show a composition bias toward basic and acidic residues.

This sequence belongs to the polyribonucleotide nucleotidyltransferase family. Mg(2+) serves as cofactor.

It localises to the cytoplasm. It catalyses the reaction RNA(n+1) + phosphate = RNA(n) + a ribonucleoside 5'-diphosphate. Involved in mRNA degradation. Catalyzes the phosphorolysis of single-stranded polyribonucleotides processively in the 3'- to 5'-direction. This Nitratidesulfovibrio vulgaris (strain ATCC 29579 / DSM 644 / CCUG 34227 / NCIMB 8303 / VKM B-1760 / Hildenborough) (Desulfovibrio vulgaris) protein is Polyribonucleotide nucleotidyltransferase.